Consider the following 244-residue polypeptide: 14-3-3 protein beta/alpha (244 aa).

Met1 is modified (N-acetylmethionine). Residue Ser184 is modified to Phosphoserine.

It belongs to the 14-3-3 family. In terms of assembly, homodimer, and heterodimer with other family members. Phosphorylated.

It localises to the cytoplasm. In terms of biological role, adapter protein implicated in the regulation of a large spectrum of both general and specialized signaling pathways. Binds to a large number of partners, usually by recognition of a phosphoserine or phosphothreonine motif. Binding generally results in the modulation of the activity of the binding partner. In Gallus gallus (Chicken), this protein is 14-3-3 protein beta/alpha (YWHAB).